We begin with the raw amino-acid sequence, 284 residues long: Pantothenate synthetase (284 aa).

An ATP-binding site is contributed by Met-30–His-37. Residue His-37 is the Proton donor of the active site. Gln-61 contacts (R)-pantoate. Beta-alanine is bound at residue Gln-61. Residue Gly-149–Asp-152 participates in ATP binding. Gln-155 serves as a coordination point for (R)-pantoate. Residues Val-178 and Leu-186 to Arg-189 each bind ATP.

It belongs to the pantothenate synthetase family. As to quaternary structure, homodimer.

The protein localises to the cytoplasm. It catalyses the reaction (R)-pantoate + beta-alanine + ATP = (R)-pantothenate + AMP + diphosphate + H(+). The protein operates within cofactor biosynthesis; (R)-pantothenate biosynthesis; (R)-pantothenate from (R)-pantoate and beta-alanine: step 1/1. Its function is as follows. Catalyzes the condensation of pantoate with beta-alanine in an ATP-dependent reaction via a pantoyl-adenylate intermediate. In Photorhabdus laumondii subsp. laumondii (strain DSM 15139 / CIP 105565 / TT01) (Photorhabdus luminescens subsp. laumondii), this protein is Pantothenate synthetase.